A 122-amino-acid chain; its full sequence is UPF0231 protein VV1_1657 (122 aa).

Belongs to the UPF0231 family.

This Vibrio vulnificus (strain CMCP6) protein is UPF0231 protein VV1_1657.